Here is a 451-residue protein sequence, read N- to C-terminus: PTS system galactitol-specific EIIC component (451 aa).

A PTS EIIC type-2 domain is found at 6 to 435 (MRYILDLGPT…IYLTGIFMTW (430 aa)). The next 10 membrane-spanning stretches (helical) occupy residues 9-29 (ILDLGPTVMLPIVIIIFSKIL), 41-61 (LHIGIGFVGIGLVIGLMLDSI), 92-112 (ASQIALVAIPIAILVNVAMLL), 138-158 (LATGSWMIGMAGVVIHAAFVY), 218-238 (FGPFGEPVTVGFVMGLIIGIL), 305-325 (AVVSASLIFIPLTILIAVCVP), 329-349 (VLPFGDLATIGFFVAMAVAVH), 357-377 (LISGVIIMSITLWIATQTIGL), 392-412 (GMVASMDQGGSPITWLLIQVF), and 415-435 (QNIPGFIIIGAIYLTGIFMTW).

As to quaternary structure, forms a complex with one each of subunit of GatA, GatB and 2 subunits of GatC.

Its subcellular location is the cell inner membrane. In terms of biological role, the phosphoenolpyruvate-dependent sugar phosphotransferase system (PTS), a major carbohydrate active transport system, catalyzes the phosphorylation of incoming sugar substrates concomitant with their translocation across the cell membrane. The enzyme II complex composed of GatA, GatB and GatC is involved in galactitol transport. This is PTS system galactitol-specific EIIC component (gatC) from Escherichia coli O157:H7.